Reading from the N-terminus, the 259-residue chain is Hydroxyacylglutathione hydrolase (259 aa).

Residues His56, His58, Asp60, His61, His112, Asp133, and His171 each coordinate Zn(2+). The disordered stretch occupies residues 220–243 (NPFLRTGETSVKEKADERSDAQNT). The segment covering 229-239 (SVKEKADERSD) has biased composition (basic and acidic residues).

This sequence belongs to the metallo-beta-lactamase superfamily. Glyoxalase II family. In terms of assembly, monomer. Zn(2+) is required as a cofactor.

It catalyses the reaction an S-(2-hydroxyacyl)glutathione + H2O = a 2-hydroxy carboxylate + glutathione + H(+). It functions in the pathway secondary metabolite metabolism; methylglyoxal degradation; (R)-lactate from methylglyoxal: step 2/2. Functionally, thiolesterase that catalyzes the hydrolysis of S-D-lactoyl-glutathione to form glutathione and D-lactic acid. In Pseudomonas syringae pv. syringae (strain B728a), this protein is Hydroxyacylglutathione hydrolase.